Here is a 235-residue protein sequence, read N- to C-terminus: Large ribosomal subunit protein uL2 (235 aa).

The tract at residues 197–218 is disordered; the sequence is VAMNPVDHPHGGGEGKTSGGRH.

It belongs to the universal ribosomal protein uL2 family. Part of the 50S ribosomal subunit. Forms a bridge to the 30S subunit in the 70S ribosome.

One of the primary rRNA binding proteins. Required for association of the 30S and 50S subunits to form the 70S ribosome, for tRNA binding and peptide bond formation. It has been suggested to have peptidyltransferase activity; this is somewhat controversial. Makes several contacts with the 16S rRNA in the 70S ribosome. The sequence is that of Large ribosomal subunit protein uL2 (rplB) from Carsonella ruddii (strain PV).